Reading from the N-terminus, the 247-residue chain is Transcription factor bHLH92 (247 aa).

One can recognise a bHLH domain in the interval 85–134 (ERSRRHMLKERTRREKQKQSYLALHSLLPFATKNDKNSIVEKAVDEIAKL).

Homodimer.

The protein resides in the nucleus. The chain is Transcription factor bHLH92 (BHLH92) from Arabidopsis thaliana (Mouse-ear cress).